Reading from the N-terminus, the 309-residue chain is Acetylglutamate kinase (309 aa).

Residues 82–83 (GG), Arg104, and Asn206 contribute to the substrate site.

This sequence belongs to the acetylglutamate kinase family. ArgB subfamily.

Its subcellular location is the cytoplasm. The enzyme catalyses N-acetyl-L-glutamate + ATP = N-acetyl-L-glutamyl 5-phosphate + ADP. It participates in amino-acid biosynthesis; L-arginine biosynthesis; N(2)-acetyl-L-ornithine from L-glutamate: step 2/4. Catalyzes the ATP-dependent phosphorylation of N-acetyl-L-glutamate. In Cupriavidus metallidurans (strain ATCC 43123 / DSM 2839 / NBRC 102507 / CH34) (Ralstonia metallidurans), this protein is Acetylglutamate kinase.